The primary structure comprises 24 residues: Pyruvate kinase (24 aa).

This sequence belongs to the pyruvate kinase family. As to quaternary structure, homotetramer. Requires Mg(2+) as cofactor. K(+) serves as cofactor.

It catalyses the reaction pyruvate + ATP = phosphoenolpyruvate + ADP + H(+). Its pathway is carbohydrate degradation; glycolysis; pyruvate from D-glyceraldehyde 3-phosphate: step 5/5. The polypeptide is Pyruvate kinase (pyk) (Clostridium pasteurianum).